The following is a 67-amino-acid chain: Large ribosomal subunit protein uL29 (67 aa).

Belongs to the universal ribosomal protein uL29 family.

The sequence is that of Large ribosomal subunit protein uL29 from Solibacter usitatus (strain Ellin6076).